A 224-amino-acid chain; its full sequence is Flagellar L-ring protein (224 aa).

A signal peptide spans 1–15 (MARYLLLASTLLLAA). Cys16 carries N-palmitoyl cysteine lipidation. Cys16 is lipidated: S-diacylglycerol cysteine.

This sequence belongs to the FlgH family. As to quaternary structure, the basal body constitutes a major portion of the flagellar organelle and consists of four rings (L,P,S, and M) mounted on a central rod.

The protein resides in the cell outer membrane. Its subcellular location is the bacterial flagellum basal body. Functionally, assembles around the rod to form the L-ring and probably protects the motor/basal body from shearing forces during rotation. This Shewanella sp. (strain ANA-3) protein is Flagellar L-ring protein.